An 84-amino-acid polypeptide reads, in one-letter code: Cell division topological specificity factor (84 aa).

The protein belongs to the MinE family.

Functionally, prevents the cell division inhibition by proteins MinC and MinD at internal division sites while permitting inhibition at polar sites. This ensures cell division at the proper site by restricting the formation of a division septum at the midpoint of the long axis of the cell. This Cupriavidus necator (strain ATCC 17699 / DSM 428 / KCTC 22496 / NCIMB 10442 / H16 / Stanier 337) (Ralstonia eutropha) protein is Cell division topological specificity factor.